Reading from the N-terminus, the 325-residue chain is GTP 3',8-cyclase (325 aa).

Positions 1–226 constitute a Radical SAM core domain; it reads MNTVNYLRIS…EGACYGNGPA (226 aa). Arg-8 contributes to the GTP binding site. [4Fe-4S] cluster is bound by residues Cys-15 and Cys-19. Tyr-21 is an S-adenosyl-L-methionine binding site. Cys-22 contributes to the [4Fe-4S] cluster binding site. Arg-60 contacts GTP. Residue Gly-64 coordinates S-adenosyl-L-methionine. Ser-91 is a binding site for GTP. S-adenosyl-L-methionine is bound at residue Ser-115. Lys-152 is a binding site for GTP. S-adenosyl-L-methionine is bound at residue Met-186. 2 residues coordinate [4Fe-4S] cluster: Cys-249 and Cys-252. 254 to 256 lines the GTP pocket; the sequence is RVR. Residue Cys-266 coordinates [4Fe-4S] cluster.

Belongs to the radical SAM superfamily. MoaA family. As to quaternary structure, monomer and homodimer. [4Fe-4S] cluster serves as cofactor.

It catalyses the reaction GTP + AH2 + S-adenosyl-L-methionine = (8S)-3',8-cyclo-7,8-dihydroguanosine 5'-triphosphate + 5'-deoxyadenosine + L-methionine + A + H(+). Its pathway is cofactor biosynthesis; molybdopterin biosynthesis. In terms of biological role, catalyzes the cyclization of GTP to (8S)-3',8-cyclo-7,8-dihydroguanosine 5'-triphosphate. This chain is GTP 3',8-cyclase, found in Gloeobacter violaceus (strain ATCC 29082 / PCC 7421).